The chain runs to 185 residues: Calcium and integrin-binding family member 4 (185 aa).

3 EF-hand domains span residues 62 to 95, 97 to 132, and 138 to 174; these read RVNP…FSEQ, CPSL…LLKS, and DLLM…SPDF. Ca(2+) contacts are provided by D110, N112, N114, and D121.

Interacts with ITGA2B (via C-terminus cytoplasmic tail region); the interaction is stabilized/increased in a calcium- and magnesium-dependent manner. As to expression, expressed weakly in megakaryocytes and endothelial cells.

The chain is Calcium and integrin-binding family member 4 (Cib4) from Mus musculus (Mouse).